Here is a 207-residue protein sequence, read N- to C-terminus: Zinc finger protein JAGGED-like (207 aa).

The segment covering 1-16 (MRADENNTLDLNNLPD) has biased composition (low complexity). The disordered stretch occupies residues 1–20 (MRADENNTLDLNNLPDDPSR). A C2H2-type zinc finger spans residues 50–72 (YECRFCSLKFFKSQALGGHMNRH).

In terms of tissue distribution, expressed in the emerging leaf, stamen and carpel primordia. Not expressed in the apical shoot meristem (SAM).

The protein resides in the nucleus. Its function is as follows. Acts with JAG to promote growth and patterning in stamens and carpels. Promotes the growth of the abaxial and adaxial sides of floral organs. Promotes the growth of the pollen-bearing microsporangia in anthers, the carpel walls of the gynoecium and the establishment of the correct number of cell layers in carpel walls. Promotes leaf blade growth and trichome development. This is Zinc finger protein JAGGED-like (JGL) from Arabidopsis thaliana (Mouse-ear cress).